Here is a 131-residue protein sequence, read N- to C-terminus: Type 3 secretion system pilotin (131 aa).

A signal peptide spans 1–15 (MSRIIALIISFLLVG). Cys16 carries N-palmitoyl cysteine lipidation. Residue Cys16 is the site of S-diacylglycerol cysteine attachment.

It belongs to the ExsB/YscW family. As to quaternary structure, interacts with YscC/SctC.

It is found in the cell outer membrane. Involved in the synthesis of the type III secretion system (T3SS), also called injectisome, which is used to inject bacterial effector proteins into eukaryotic host cells. Pilot protein that is required for the proper localization of the secretin YscC/SctC in the outer membrane. Also required for efficient oligomerization of YscC/SctC and stabilization of the oligomers. In Yersinia enterocolitica, this protein is Type 3 secretion system pilotin.